We begin with the raw amino-acid sequence, 86 residues long: Large ribosomal subunit protein bL31B (86 aa).

It belongs to the bacterial ribosomal protein bL31 family. Type B subfamily. As to quaternary structure, part of the 50S ribosomal subunit.

This is Large ribosomal subunit protein bL31B from Yersinia enterocolitica serotype O:8 / biotype 1B (strain NCTC 13174 / 8081).